A 596-amino-acid polypeptide reads, in one-letter code: Probable ABC transporter ECU01_0200/ECU01_1410 (596 aa).

The next 3 helical transmembrane spans lie at 26–46, 173–193, and 289–309; these read ALMA…VMSI, LVPI…MLRI, and LSVL…LGGI. The ABC transmembrane type-1 domain maps to 39-318; the sequence is KWFDVMSIKR…IARDLGFWLT (280 aa). In terms of domain architecture, ABC transporter spans 361 to 593; it reads VEFDDVSFAY…RGMYWRMKTA (233 aa). ATP contacts are provided by residues tyrosine 370 and 400–411; that span reads GRPGSGKSTILR.

The protein belongs to the ABC transporter superfamily. ABCB family. Heavy Metal importer (TC 3.A.1.210) subfamily.

It localises to the membrane. This is Probable ABC transporter ECU01_0200/ECU01_1410 from Encephalitozoon cuniculi (strain GB-M1) (Microsporidian parasite).